Here is a 214-residue protein sequence, read N- to C-terminus: Adenylate kinase (214 aa).

An ATP-binding site is contributed by 10-15 (GAGKGT). Positions 30–59 (STGDMLRAAVKAGTPLGLEAKKVMDAGQLV) are NMP. AMP contacts are provided by residues Thr31, Arg36, 57-59 (QLV), 85-88 (GFPR), and Gln92. The segment at 122-159 (GRRVHPGSGRVYHVVFNPPKVEGKDDVTGEDLAIRPDD) is LID. Residues Arg123 and 132–133 (VY) each bind ATP. Residues Arg156 and Arg167 each contribute to the AMP site. An ATP-binding site is contributed by Gln200.

The protein belongs to the adenylate kinase family. As to quaternary structure, monomer.

Its subcellular location is the cytoplasm. The catalysed reaction is AMP + ATP = 2 ADP. It functions in the pathway purine metabolism; AMP biosynthesis via salvage pathway; AMP from ADP: step 1/1. Catalyzes the reversible transfer of the terminal phosphate group between ATP and AMP. Plays an important role in cellular energy homeostasis and in adenine nucleotide metabolism. The sequence is that of Adenylate kinase from Shewanella putrefaciens (strain CN-32 / ATCC BAA-453).